The chain runs to 354 residues: Uroporphyrinogen decarboxylase (354 aa).

Substrate-binding positions include arginine 27–arginine 31, aspartate 77, tyrosine 154, threonine 209, and histidine 327.

This sequence belongs to the uroporphyrinogen decarboxylase family. In terms of assembly, homodimer.

Its subcellular location is the cytoplasm. It catalyses the reaction uroporphyrinogen III + 4 H(+) = coproporphyrinogen III + 4 CO2. The protein operates within porphyrin-containing compound metabolism; protoporphyrin-IX biosynthesis; coproporphyrinogen-III from 5-aminolevulinate: step 4/4. Catalyzes the decarboxylation of four acetate groups of uroporphyrinogen-III to yield coproporphyrinogen-III. In Pseudomonas putida (strain W619), this protein is Uroporphyrinogen decarboxylase.